A 460-amino-acid chain; its full sequence is Bifunctional protein GlmU (460 aa).

The tract at residues 1 to 235 (MTLTAAIVLA…PLSVEGVNDR (235 aa)) is pyrophosphorylase. UDP-N-acetyl-alpha-D-glucosamine contacts are provided by residues 9 to 12 (LAAG), Lys23, Gln76, and 81 to 82 (GT). Mg(2+) is bound at residue Asp109. Residues Gly146, Glu161, Asn176, and Asn233 each coordinate UDP-N-acetyl-alpha-D-glucosamine. Mg(2+) is bound at residue Asn233. The segment at 236-256 (VQLASLAKAHNLRVCRQWMLD) is linker. The tract at residues 257–460 (GVTIVDPQTT…VDNWKPAWER (204 aa)) is N-acetyltransferase. Positions 338 and 356 each coordinate UDP-N-acetyl-alpha-D-glucosamine. Catalysis depends on His368, which acts as the Proton acceptor. Positions 371 and 382 each coordinate UDP-N-acetyl-alpha-D-glucosamine. Residues 391-392 (NY) and Ala428 each bind acetyl-CoA.

In the N-terminal section; belongs to the N-acetylglucosamine-1-phosphate uridyltransferase family. It in the C-terminal section; belongs to the transferase hexapeptide repeat family. As to quaternary structure, homotrimer. Mg(2+) serves as cofactor.

The protein resides in the cytoplasm. The enzyme catalyses alpha-D-glucosamine 1-phosphate + acetyl-CoA = N-acetyl-alpha-D-glucosamine 1-phosphate + CoA + H(+). The catalysed reaction is N-acetyl-alpha-D-glucosamine 1-phosphate + UTP + H(+) = UDP-N-acetyl-alpha-D-glucosamine + diphosphate. Its pathway is nucleotide-sugar biosynthesis; UDP-N-acetyl-alpha-D-glucosamine biosynthesis; N-acetyl-alpha-D-glucosamine 1-phosphate from alpha-D-glucosamine 6-phosphate (route II): step 2/2. It functions in the pathway nucleotide-sugar biosynthesis; UDP-N-acetyl-alpha-D-glucosamine biosynthesis; UDP-N-acetyl-alpha-D-glucosamine from N-acetyl-alpha-D-glucosamine 1-phosphate: step 1/1. It participates in bacterial outer membrane biogenesis; LPS lipid A biosynthesis. Its function is as follows. Catalyzes the last two sequential reactions in the de novo biosynthetic pathway for UDP-N-acetylglucosamine (UDP-GlcNAc). The C-terminal domain catalyzes the transfer of acetyl group from acetyl coenzyme A to glucosamine-1-phosphate (GlcN-1-P) to produce N-acetylglucosamine-1-phosphate (GlcNAc-1-P), which is converted into UDP-GlcNAc by the transfer of uridine 5-monophosphate (from uridine 5-triphosphate), a reaction catalyzed by the N-terminal domain. This is Bifunctional protein GlmU from Bifidobacterium animalis subsp. lactis (strain AD011).